A 92-amino-acid chain; its full sequence is Large ribosomal subunit protein eL43y (92 aa).

The C4-type zinc finger occupies 39–60 (CEFCGKYGVKRKAVGIWGCKDC).

This sequence belongs to the eukaryotic ribosomal protein eL43 family.

In Arabidopsis thaliana (Mouse-ear cress), this protein is Large ribosomal subunit protein eL43y (RPL37AC).